Reading from the N-terminus, the 235-residue chain is Probable inactive serine protease 37 (235 aa).

The first 19 residues, 1–19 (MKFIFYLSVLTGTFLFADS), serve as a signal peptide directing secretion. The Peptidase S1 domain occupies 20 to 233 (SVQKEDPAPY…YVSWIENTAK (214 aa)). 3 cysteine pairs are disulfide-bonded: cysteine 40-cysteine 56, cysteine 131-cysteine 198, and cysteine 163-cysteine 177.

The protein belongs to the peptidase S1 family.

It is found in the cytoplasmic vesicle. The protein localises to the secretory vesicle. Its subcellular location is the acrosome. The protein resides in the secreted. Functionally, plays a role in male fertility. May have a role in sperm migration or binding to zona-intact eggs. Involved in the activation of the proacrosin/acrosin system. The sequence is that of Probable inactive serine protease 37 from Macaca fascicularis (Crab-eating macaque).